The primary structure comprises 403 residues: Na(+)/H(+) antiporter NhaH (403 aa).

Residues 1–6 (MHGFHD) lie on the Cytoplasmic side of the membrane. A helical transmembrane segment spans residues 7–27 (VFIQILLLLAISVSVIAIAKL). The Extracellular portion of the chain corresponds to 28-30 (LKE). Residues 31–51 (PDSIALVLVGLVLGLTELPII) traverse the membrane as a helical segment. Residues 52 to 65 (EDAERYITQSEVFQ) are Cytoplasmic-facing. The helical transmembrane segment at 66–86 (ATIISLFLPILLGDATLKLPF) threads the bilayer. Topologically, residues 87–98 (HHLFSQKKTVLG) are extracellular. The helical transmembrane segment at 99–119 (LAFVGTFVSSICIGTAAYFLL) threads the bilayer. The Cytoplasmic segment spans residues 120–124 (DLPLA). A helical membrane pass occupies residues 125-145 (VAFTFAALMSATDPISVLSIF). Residues 146–167 (KSLGVPQKMSTVMEGESLFNDG) are Extracellular-facing. A helical transmembrane segment spans residues 168–188 (IAVVLFKIASIYLLTYMEMGW). Topologically, residues 189–195 (AGLGSGV) are cytoplasmic. A helical transmembrane segment spans residues 196–216 (FLFLKFAIGGALVGLVLGYFF). The Extracellular segment spans residues 217–218 (SQ). A helical transmembrane segment spans residues 219–239 (VIRVFDDYPLEVAFSALLFFG). Residues 240–241 (SY) are Cytoplasmic-facing. Residues 242–262 (FIAEHFHTSGVIAVVVGGFVF) form a helical membrane-spanning segment. The Extracellular segment spans residues 263-281 (GDYGAKIGMSKETKTNINT). A helical membrane pass occupies residues 282-302 (FWDSVTLIANALIFLMVGLEI). Topologically, residues 303–310 (RNIDLAGN) are cytoplasmic. A helical transmembrane segment spans residues 311 to 331 (WGVIVGAILIVLVGRTIAVYL). The Extracellular portion of the chain corresponds to 332–372 (GTGWVQELSSKERLLINWGGLRGSLSVALALSLPMDFAGRD). Residues 373-393 (QVLLLTFSVVLFSLIVQGLTL) form a helical membrane-spanning segment. The Cytoplasmic portion of the chain corresponds to 394 to 403 (KPLIKKLGMI).

Belongs to the monovalent cation:proton antiporter 1 (CPA1) transporter (TC 2.A.36) family.

It localises to the cell membrane. Functionally, na(+)/H(+) antiporter that extrudes sodium in exchange for external protons. Can also transport lithium. The polypeptide is Na(+)/H(+) antiporter NhaH (nhaH) (Halobacillus dabanensis).